A 421-amino-acid chain; its full sequence is Histidine--tRNA ligase (421 aa).

It belongs to the class-II aminoacyl-tRNA synthetase family. As to quaternary structure, homodimer.

It is found in the cytoplasm. The enzyme catalyses tRNA(His) + L-histidine + ATP = L-histidyl-tRNA(His) + AMP + diphosphate + H(+). The chain is Histidine--tRNA ligase from Fervidobacterium nodosum (strain ATCC 35602 / DSM 5306 / Rt17-B1).